A 183-amino-acid polypeptide reads, in one-letter code: Large ribosomal subunit protein uL10 (183 aa).

Belongs to the universal ribosomal protein uL10 family. Part of the ribosomal stalk of the 50S ribosomal subunit. The N-terminus interacts with L11 and the large rRNA to form the base of the stalk. The C-terminus forms an elongated spine to which L12 dimers bind in a sequential fashion forming a multimeric L10(L12)X complex.

In terms of biological role, forms part of the ribosomal stalk, playing a central role in the interaction of the ribosome with GTP-bound translation factors. The polypeptide is Large ribosomal subunit protein uL10 (Mesomycoplasma hyopneumoniae (strain 7448) (Mycoplasma hyopneumoniae)).